Here is a 66-residue protein sequence, read N- to C-terminus: COP-associated protein (66 aa).

Residues Met1–Val66 enclose the HMA domain. The Cu cation site is built by Cys12 and Cys15. A disulfide bond links Cys12 and Cys15.

Its function is as follows. Part of a cation-transporting system which is associated with copper export out of the H.pylori cells. This chain is COP-associated protein (copP), found in Helicobacter pylori (strain ATCC 700392 / 26695) (Campylobacter pylori).